We begin with the raw amino-acid sequence, 101 residues long: NAD(P)H-quinone oxidoreductase subunit 4L, chloroplastic (101 aa).

The next 3 helical transmembrane spans lie at 2 to 22, 32 to 52, and 61 to 81; these read MTEH…YGLI, MCLE…SDLF, and IFSI…PAIV.

Belongs to the complex I subunit 4L family. As to quaternary structure, NDH is composed of at least 16 different subunits, 5 of which are encoded in the nucleus.

Its subcellular location is the plastid. It localises to the chloroplast thylakoid membrane. It carries out the reaction a plastoquinone + NADH + (n+1) H(+)(in) = a plastoquinol + NAD(+) + n H(+)(out). It catalyses the reaction a plastoquinone + NADPH + (n+1) H(+)(in) = a plastoquinol + NADP(+) + n H(+)(out). Its function is as follows. NDH shuttles electrons from NAD(P)H:plastoquinone, via FMN and iron-sulfur (Fe-S) centers, to quinones in the photosynthetic chain and possibly in a chloroplast respiratory chain. The immediate electron acceptor for the enzyme in this species is believed to be plastoquinone. Couples the redox reaction to proton translocation, and thus conserves the redox energy in a proton gradient. The sequence is that of NAD(P)H-quinone oxidoreductase subunit 4L, chloroplastic from Liriodendron tulipifera (Tuliptree).